A 157-amino-acid chain; its full sequence is MSKVTVDLQMAFDGTGVPSKTLFEAWAEAAWQGENPTEVTIRIVDNDESRELNHQYRGKDKPTNVLSFPFEAPAGITVPLAGDLVICAPVVEQEAREQNKDAVAHWAHMVVHGMLHLQGYDHIEVNEAEVMEALEIRLLAQLGFANPYEAEETEPDS.

3 residues coordinate Zn(2+): His112, His116, and His122.

The protein belongs to the endoribonuclease YbeY family. Zn(2+) is required as a cofactor.

It localises to the cytoplasm. Single strand-specific metallo-endoribonuclease involved in late-stage 70S ribosome quality control and in maturation of the 3' terminus of the 16S rRNA. This chain is Endoribonuclease YbeY, found in Marinobacter nauticus (strain ATCC 700491 / DSM 11845 / VT8) (Marinobacter aquaeolei).